The chain runs to 72 residues: Protein RALF-like 12 (72 aa).

The signal sequence occupies residues 1-17 (MKAWVIGLLVICAVVIA). 2 disulfide bridges follow: Cys34/Cys43 and Cys63/Cys69. Residues 37–60 (PNPPPGCNPPGTEQKNPTPVNEYS) form a disordered region.

It belongs to the plant rapid alkalinization factor (RALF) family.

It is found in the secreted. Its function is as follows. Cell signaling peptide that may regulate plant stress, growth, and development. Mediates a rapid alkalinization of extracellular space by mediating a transient increase in the cytoplasmic Ca(2+) concentration leading to a calcium-dependent signaling events through a cell surface receptor and a concomitant activation of some intracellular mitogen-activated protein kinases. The polypeptide is Protein RALF-like 12 (RALFL12) (Arabidopsis thaliana (Mouse-ear cress)).